The sequence spans 188 residues: Probable chorismate pyruvate-lyase (188 aa).

Substrate-binding residues include arginine 90, leucine 128, and glutamate 175.

It belongs to the UbiC family.

The protein resides in the cytoplasm. It catalyses the reaction chorismate = 4-hydroxybenzoate + pyruvate. It participates in cofactor biosynthesis; ubiquinone biosynthesis. Its function is as follows. Removes the pyruvyl group from chorismate, with concomitant aromatization of the ring, to provide 4-hydroxybenzoate (4HB) for the ubiquinone pathway. This Marinobacter nauticus (strain ATCC 700491 / DSM 11845 / VT8) (Marinobacter aquaeolei) protein is Probable chorismate pyruvate-lyase.